The chain runs to 352 residues: DNA polymerase IV (352 aa).

Positions 4–185 (IIHVDMDCFY…LPLEKIPGVG (182 aa)) constitute a UmuC domain. Mg(2+) is bound by residues aspartate 8 and aspartate 103. Glutamate 104 is a catalytic residue.

It belongs to the DNA polymerase type-Y family. Monomer. Mg(2+) is required as a cofactor.

The protein resides in the cytoplasm. It catalyses the reaction DNA(n) + a 2'-deoxyribonucleoside 5'-triphosphate = DNA(n+1) + diphosphate. Functionally, poorly processive, error-prone DNA polymerase involved in untargeted mutagenesis. Copies undamaged DNA at stalled replication forks, which arise in vivo from mismatched or misaligned primer ends. These misaligned primers can be extended by PolIV. Exhibits no 3'-5' exonuclease (proofreading) activity. May be involved in translesional synthesis, in conjunction with the beta clamp from PolIII. The chain is DNA polymerase IV from Pectobacterium atrosepticum (strain SCRI 1043 / ATCC BAA-672) (Erwinia carotovora subsp. atroseptica).